A 509-amino-acid chain; its full sequence is ATP synthase subunit alpha (509 aa).

Residue 169–176 (GDRQTGKT) coordinates ATP.

The protein belongs to the ATPase alpha/beta chains family. F-type ATPases have 2 components, CF(1) - the catalytic core - and CF(0) - the membrane proton channel. CF(1) has five subunits: alpha(3), beta(3), gamma(1), delta(1), epsilon(1). CF(0) has three main subunits: a(1), b(2) and c(9-12). The alpha and beta chains form an alternating ring which encloses part of the gamma chain. CF(1) is attached to CF(0) by a central stalk formed by the gamma and epsilon chains, while a peripheral stalk is formed by the delta and b chains.

The protein localises to the cell inner membrane. The enzyme catalyses ATP + H2O + 4 H(+)(in) = ADP + phosphate + 5 H(+)(out). Its function is as follows. Produces ATP from ADP in the presence of a proton gradient across the membrane. The alpha chain is a regulatory subunit. The polypeptide is ATP synthase subunit alpha (Brucella ovis (strain ATCC 25840 / 63/290 / NCTC 10512)).